Here is a 466-residue protein sequence, read N- to C-terminus: Asparagine--tRNA ligase (466 aa).

Belongs to the class-II aminoacyl-tRNA synthetase family. Homodimer.

The protein localises to the cytoplasm. The enzyme catalyses tRNA(Asn) + L-asparagine + ATP = L-asparaginyl-tRNA(Asn) + AMP + diphosphate + H(+). This Buchnera aphidicola subsp. Baizongia pistaciae (strain Bp) protein is Asparagine--tRNA ligase.